We begin with the raw amino-acid sequence, 93 residues long: Putative regulatory protein Amet_2791 (93 aa).

The protein belongs to the RemA family.

The chain is Putative regulatory protein Amet_2791 from Alkaliphilus metalliredigens (strain QYMF).